Consider the following 149-residue polypeptide: uncharacterized protein (149 aa).

The segment covering Glu-130–Lys-144 has biased composition (basic and acidic residues). The segment at Glu-130–Glu-149 is disordered.

This is an uncharacterized protein from Methanocaldococcus jannaschii (strain ATCC 43067 / DSM 2661 / JAL-1 / JCM 10045 / NBRC 100440) (Methanococcus jannaschii).